A 63-amino-acid chain; its full sequence is Large ribosomal subunit protein uL29 (63 aa).

The protein belongs to the universal ribosomal protein uL29 family.

In Pseudoalteromonas atlantica (strain T6c / ATCC BAA-1087), this protein is Large ribosomal subunit protein uL29.